The sequence spans 205 residues: Ribosomal RNA small subunit methyltransferase G (205 aa).

S-adenosyl-L-methionine-binding positions include glycine 76, leucine 81, 127–128, and arginine 140; that span reads IE.

This sequence belongs to the methyltransferase superfamily. RNA methyltransferase RsmG family.

Its subcellular location is the cytoplasm. The enzyme catalyses guanosine(527) in 16S rRNA + S-adenosyl-L-methionine = N(7)-methylguanosine(527) in 16S rRNA + S-adenosyl-L-homocysteine. Its function is as follows. Specifically methylates the N7 position of guanine in position 527 of 16S rRNA. The protein is Ribosomal RNA small subunit methyltransferase G of Francisella tularensis subsp. holarctica (strain FTNF002-00 / FTA).